The primary structure comprises 309 residues: Ribose-phosphate pyrophosphokinase (309 aa).

Residues 42-44 (DEE) and 102-103 (RQ) each bind ATP. Residues His-136 and Asp-175 each coordinate Mg(2+). The active site involves Lys-199. Residues Arg-201, Asp-226, and 230–234 (STGGT) each bind D-ribose 5-phosphate.

This sequence belongs to the ribose-phosphate pyrophosphokinase family. Class III (archaeal) subfamily. It depends on Mg(2+) as a cofactor.

The protein resides in the cytoplasm. The enzyme catalyses D-ribose 5-phosphate + ATP = 5-phospho-alpha-D-ribose 1-diphosphate + AMP + H(+). Its pathway is metabolic intermediate biosynthesis; 5-phospho-alpha-D-ribose 1-diphosphate biosynthesis; 5-phospho-alpha-D-ribose 1-diphosphate from D-ribose 5-phosphate (route I): step 1/1. Functionally, involved in the biosynthesis of the central metabolite phospho-alpha-D-ribosyl-1-pyrophosphate (PRPP) via the transfer of pyrophosphoryl group from ATP to 1-hydroxyl of ribose-5-phosphate (Rib-5-P). The polypeptide is Ribose-phosphate pyrophosphokinase (Aeropyrum pernix (strain ATCC 700893 / DSM 11879 / JCM 9820 / NBRC 100138 / K1)).